The following is a 474-amino-acid chain: ATP synthase subunit beta (474 aa).

Residue 151-158 (GGAGVGKT) coordinates ATP.

Belongs to the ATPase alpha/beta chains family. As to quaternary structure, F-type ATPases have 2 components, CF(1) - the catalytic core - and CF(0) - the membrane proton channel. CF(1) has five subunits: alpha(3), beta(3), gamma(1), delta(1), epsilon(1). CF(0) has three main subunits: a(1), b(2) and c(9-12). The alpha and beta chains form an alternating ring which encloses part of the gamma chain. CF(1) is attached to CF(0) by a central stalk formed by the gamma and epsilon chains, while a peripheral stalk is formed by the delta and b chains.

It is found in the cell inner membrane. It catalyses the reaction ATP + H2O + 4 H(+)(in) = ADP + phosphate + 5 H(+)(out). Functionally, produces ATP from ADP in the presence of a proton gradient across the membrane. The catalytic sites are hosted primarily by the beta subunits. This chain is ATP synthase subunit beta, found in Ruegeria sp. (strain TM1040) (Silicibacter sp.).